Consider the following 169-residue polypeptide: MFTSAHANRSAQASAPAGHYAHRSGEQNTNGLISEIVYREDQPMMTQLLLLPLLQQLGQQSRWQLWLTPQQKLSREWVQSAGLPLSKVMQISQLSPSHTIDSMIRALRTGNYSVVICWLAEELTADEHERLVNAAQVGSAMGFIMRPVRNQGTLGRQLSGLKIHSNLYH.

The segment covering 1–13 (MFTSAHANRSAQA) has biased composition (polar residues). Residues 1–26 (MFTSAHANRSAQASAPAGHYAHRSGE) are disordered. The segment at 106–112 (ALRTGNY) is ftsZ binding. The segment at 162-169 (KIHSNLYH) is lon protease binding.

This sequence belongs to the SulA family. In terms of assembly, interacts with FtsZ. In terms of processing, is rapidly cleaved and degraded by the Lon protease once DNA damage is repaired.

In terms of biological role, component of the SOS system and an inhibitor of cell division. Accumulation of SulA causes rapid cessation of cell division and the appearance of long, non-septate filaments. In the presence of GTP, binds a polymerization-competent form of FtsZ in a 1:1 ratio, thus inhibiting FtsZ polymerization and therefore preventing it from participating in the assembly of the Z ring. This mechanism prevents the premature segregation of damaged DNA to daughter cells during cell division. This chain is Cell division inhibitor SulA, found in Klebsiella pneumoniae subsp. pneumoniae (strain ATCC 700721 / MGH 78578).